The following is a 153-amino-acid chain: Cytochrome c oxidase subunit 5A, mitochondrial (153 aa).

The N-terminal 20 residues, 1-20 (MLRNTFTRAGGLSRITSVRF), are a transit peptide targeting the mitochondrion. Over 21 to 88 (AQTHALSNAA…EWGPRRPVLN (68 aa)) the chain is Mitochondrial matrix. Residues 89 to 111 (KGDSSFIAKGVAAGLLFSVGLFA) traverse the membrane as a helical segment. Residues 112–153 (VVRMAGGQDAKTMNKEWQLKSDEYLKSKNANPWGGYSQVQSK) are Mitochondrial intermembrane-facing.

The protein belongs to the cytochrome c oxidase IV family. In terms of assembly, component of the cytochrome c oxidase (complex IV, CIV), a multisubunit enzyme composed of 12 subunits. The complex is composed of a catalytic core of 3 subunits COX1, COX2 and COX3, encoded in the mitochondrial DNA, and 9 supernumerary subunits COX4, COX5A (or COX5B), COX6, COX7, COX8, COX9, COX12, COX13 and COX26, which are encoded in the nuclear genome. COX5A is the predominant subunit V during aerobic/normoxic growth, it gets replaced by COX5B under anaerobic/hypoxic conditions. The complex exists as a monomer or a dimer and forms supercomplexes (SCs) in the inner mitochondrial membrane with a dimer of ubiquinol-cytochrome c oxidoreductase (cytochrome b-c1 complex, complex III, CIII), resulting in 2 different assemblies (supercomplexes III(2)IV and III(2)IV(2)). COX5A interacts with COR1, CYT1 and QCR6 at the CIII-CIV interface.

It localises to the mitochondrion inner membrane. It participates in energy metabolism; oxidative phosphorylation. Its function is as follows. Component of the cytochrome c oxidase, the last enzyme in the mitochondrial electron transport chain which drives oxidative phosphorylation. The respiratory chain contains 3 multisubunit complexes succinate dehydrogenase (complex II, CII), ubiquinol-cytochrome c oxidoreductase (cytochrome b-c1 complex, complex III, CIII) and cytochrome c oxidase (complex IV, CIV), that cooperate to transfer electrons derived from NADH and succinate to molecular oxygen, creating an electrochemical gradient over the inner membrane that drives transmembrane transport and the ATP synthase. Cytochrome c oxidase is the component of the respiratory chain that catalyzes the reduction of oxygen to water. Electrons originating from reduced cytochrome c in the intermembrane space (IMS) are transferred via the dinuclear copper A center (CU(A)) of COX2 and heme A of COX1 to the active site in COX1, a binuclear center (BNC) formed by heme A3 and copper B (CU(B)). The BNC reduces molecular oxygen to 2 water molecules using 4 electrons from cytochrome c in the IMS and 4 protons from the mitochondrial matrix. In Saccharomyces cerevisiae (strain ATCC 204508 / S288c) (Baker's yeast), this protein is Cytochrome c oxidase subunit 5A, mitochondrial (COX5A).